The sequence spans 319 residues: Very-long-chain 3-oxoacyl-CoA reductase-A (319 aa).

The chain crosses the membrane as a helical span at residues 17–37; sequence LFWVGALITASLALYVVYKTI. 56–85 contributes to the NADP(+) binding site; the sequence is GKWAVVTGATDGIGKSYAEELARRGFSMML. Helical transmembrane passes span 188-208 and 282-302; these read GVIL…LTIY and AVMG…NLGL. Ser195 is a binding site for substrate. Residue Tyr208 is the Proton acceptor of the active site.

It belongs to the short-chain dehydrogenases/reductases (SDR) family. 17-beta-HSD 3 subfamily.

The protein resides in the endoplasmic reticulum membrane. It carries out the reaction a very-long-chain (3R)-3-hydroxyacyl-CoA + NADP(+) = a very-long-chain 3-oxoacyl-CoA + NADPH + H(+). The catalysed reaction is 17beta-estradiol + NAD(+) = estrone + NADH + H(+). The enzyme catalyses 17beta-estradiol + NADP(+) = estrone + NADPH + H(+). It participates in lipid metabolism; fatty acid biosynthesis. It functions in the pathway steroid biosynthesis; estrogen biosynthesis. Its function is as follows. Catalyzes the second of the four reactions of the long-chain fatty acids elongation cycle. This endoplasmic reticulum-bound enzymatic process, allows the addition of two carbons to the chain of long- and very long-chain fatty acids/VLCFAs per cycle. This enzyme has a 3-ketoacyl-CoA reductase activity, reducing 3-ketoacyl-CoA to 3-hydroxyacyl-CoA, within each cycle of fatty acid elongation. Thereby, it may participate in the production of VLCFAs of different chain lengths that are involved in multiple biological processes as precursors of membrane lipids and lipid mediators. May also catalyze the transformation of estrone (E1) into estradiol (E2) and play a role in estrogen formation. This chain is Very-long-chain 3-oxoacyl-CoA reductase-A (hsd17b12a), found in Danio rerio (Zebrafish).